The primary structure comprises 267 residues: DNA repair protein RecO (267 aa).

This sequence belongs to the RecO family.

Functionally, involved in DNA repair and RecF pathway recombination. The protein is DNA repair protein RecO of Mesoplasma florum (strain ATCC 33453 / NBRC 100688 / NCTC 11704 / L1) (Acholeplasma florum).